The sequence spans 407 residues: Substance-P receptor (407 aa).

Topologically, residues 1-31 are extracellular; the sequence is MDNVLQVDSDLFPNISTNTSEPNQFVQPAWQ. 2 N-linked (GlcNAc...) asparagine glycosylation sites follow: asparagine 14 and asparagine 18. A helical transmembrane segment spans residues 32-54; that stretch reads IVLWAAAYTVIVVTSVVGNVVVM. The Cytoplasmic segment spans residues 55 to 64; the sequence is WIILAHKRMR. The helical transmembrane segment at 65–86 threads the bilayer; sequence TVTNYFLVNLAFAEASMAAFNT. Residues 87–106 are Extracellular-facing; sequence VVNFTYAVHNEWYYGLFYCK. The cysteines at positions 105 and 180 are disulfide-linked. The helical transmembrane segment at 107–128 threads the bilayer; that stretch reads FHNFFPIAAVFASIYSMTAVAF. At 129 to 148 the chain is on the cytoplasmic side; it reads DRYMAIIHPLQPRLSATATK. The helical transmembrane segment at 149–169 threads the bilayer; that stretch reads VVICVIWVLALLLAFPQGYYS. Residues 170 to 194 lie on the Extracellular side of the membrane; it reads TTETMPNRVVCMIEWPEHPNKIYEK. The chain crosses the membrane as a helical span at residues 195–219; that stretch reads VYHICVTVLIYFLPLLVIGYAYTVV. Topologically, residues 220–248 are cytoplasmic; it reads GITLWASEIPGDSSDRYHEQVSAKRKVVK. A helical membrane pass occupies residues 249–270; the sequence is MMIVVVCTFAICWLPFHIFFLL. The Extracellular portion of the chain corresponds to 271–283; sequence PYINPDLYLEKFI. Residues 284 to 308 form a helical membrane-spanning segment; that stretch reads QQVYLAIMWLAMSSTMYNPIIYCCL. Residues 309–407 are Cytoplasmic-facing; the sequence is NDRFRLGFKH…SFSFYSNMLS (99 aa). Cysteine 322 carries S-palmitoyl cysteine lipidation. Residues 365–394 are disordered; the sequence is HEEELEDGPKTTPSSLDLTSNGSSRSDSKT. A compositionally biased stretch (polar residues) spans 375–394; it reads TTPSSLDLTSNGSSRSDSKT.

Belongs to the G-protein coupled receptor 1 family. Interacts with ARRB1.

The protein resides in the cell membrane. This is a receptor for the tachykinin neuropeptide substance P. It is probably associated with G proteins that activate a phosphatidylinositol-calcium second messenger system. The chain is Substance-P receptor (TACR1) from Canis lupus familiaris (Dog).